The primary structure comprises 691 residues: Elongation factor G (691 aa).

A tr-type G domain is found at 8 to 282 (ERVRNIGIAA…AVVDYLPAPI (275 aa)). GTP-binding positions include 17–24 (AHIDAGKT), 81–85 (DTPGH), and 135–138 (NKMD).

This sequence belongs to the TRAFAC class translation factor GTPase superfamily. Classic translation factor GTPase family. EF-G/EF-2 subfamily.

It localises to the cytoplasm. Catalyzes the GTP-dependent ribosomal translocation step during translation elongation. During this step, the ribosome changes from the pre-translocational (PRE) to the post-translocational (POST) state as the newly formed A-site-bound peptidyl-tRNA and P-site-bound deacylated tRNA move to the P and E sites, respectively. Catalyzes the coordinated movement of the two tRNA molecules, the mRNA and conformational changes in the ribosome. The chain is Elongation factor G from Synechococcus sp. (strain WH7803).